Consider the following 318-residue polypeptide: Deoxyribose-phosphate aldolase (318 aa).

The Proton donor/acceptor role is filled by Asp155. The active-site Schiff-base intermediate with acetaldehyde is Lys218. Lys254 (proton donor/acceptor) is an active-site residue.

It belongs to the DeoC/FbaB aldolase family. DeoC type 2 subfamily. Interacts with YBX1.

It is found in the cytoplasm. The protein resides in the cytoplasmic granule. The protein localises to the nucleus. The catalysed reaction is 2-deoxy-D-ribose 5-phosphate = D-glyceraldehyde 3-phosphate + acetaldehyde. The protein operates within carbohydrate degradation; 2-deoxy-D-ribose 1-phosphate degradation; D-glyceraldehyde 3-phosphate and acetaldehyde from 2-deoxy-alpha-D-ribose 1-phosphate: step 2/2. Its function is as follows. Catalyzes a reversible aldol reaction between acetaldehyde and D-glyceraldehyde 3-phosphate to generate 2-deoxy-D-ribose 5-phosphate. Participates in stress granule (SG) assembly. May allow ATP production from extracellular deoxyinosine in conditions of energy deprivation. The chain is Deoxyribose-phosphate aldolase (DERA) from Bos taurus (Bovine).